A 615-amino-acid polypeptide reads, in one-letter code: UvrABC system protein C (615 aa).

The 80-residue stretch at 12 to 91 (EKPGVYIMKD…IKKYKPKYNV (80 aa)) folds into the GIY-YIG domain. Residues 203–238 (DWLIQKLKEDMKKAAEELRFEEAARIRDQIFAIERT) form the UVR domain.

The protein belongs to the UvrC family. In terms of assembly, interacts with UvrB in an incision complex.

It localises to the cytoplasm. Its function is as follows. The UvrABC repair system catalyzes the recognition and processing of DNA lesions. UvrC both incises the 5' and 3' sides of the lesion. The N-terminal half is responsible for the 3' incision and the C-terminal half is responsible for the 5' incision. The sequence is that of UvrABC system protein C from Thermoanaerobacter sp. (strain X514).